Reading from the N-terminus, the 1102-residue chain is Putative ISWI chromatin-remodeling complex subunit YPL216W (1102 aa).

The region spanning 23 to 131 (ETPWVIKESS…DTVCLKTIQK (109 aa)) is the WAC domain. Residues 271-301 (ELYTPLTIPPESDVEPADWKETSETSETSET) form a disordered region. Residues 375 to 435 (QFPTERLLVV…FLKTYNSKGS (61 aa)) enclose the DDT domain. Residues 673–743 (CNGIRLKLDS…EDIAFLEAKL (71 aa)) are a coiled coil.

It is found in the nucleus. In terms of biological role, may be required for the activity of an ISWI chromatin-remodeling complex. The sequence is that of Putative ISWI chromatin-remodeling complex subunit YPL216W from Saccharomyces cerevisiae (strain ATCC 204508 / S288c) (Baker's yeast).